The chain runs to 494 residues: Alpha-amylase-related protein (494 aa).

The first 20 residues, 1–20, serve as a signal peptide directing secretion; it reads MFKFAAAVILCLVAASSTLA. The residue at position 21 (Gln21) is a Pyrrolidone carboxylic acid. A disulfide bridge connects residues Cys48 and Cys104. Residues Asn118, Gln169, and Asp178 each contribute to the Ca(2+) site. A disulfide bridge links Cys157 with Cys171. Arg206 contributes to the chloride binding site. Residue Asp208 is the Nucleophile of the active site. Residue His212 coordinates Ca(2+). The Proton donor role is filled by Glu245. Chloride is bound by residues Asn308 and Arg343. Disulfide bonds link Cys376–Cys382, Cys418–Cys441, and Cys448–Cys460.

This sequence belongs to the glycosyl hydrolase 13 family. As to quaternary structure, monomer. Ca(2+) serves as cofactor. It depends on chloride as a cofactor.

Its subcellular location is the secreted. The enzyme catalyses Endohydrolysis of (1-&gt;4)-alpha-D-glucosidic linkages in polysaccharides containing three or more (1-&gt;4)-alpha-linked D-glucose units.. In Drosophila atripex (Fruit fly), this protein is Alpha-amylase-related protein (Amyrel).